A 314-amino-acid polypeptide reads, in one-letter code: Olfactory receptor 5P76 (314 aa).

At 1-28 the chain is on the extracellular side; it reads MAFLEDGNHTAVTGFILLGLTDDPVLRV. A glycan (N-linked (GlcNAc...) asparagine) is linked at N8. The helical transmembrane segment at 29-49 threads the bilayer; that stretch reads VLFVIILCIYLVTVSGNLSTI. Over 50–57 the chain is Cytoplasmic; it reads LLIRVSSQ. The chain crosses the membrane as a helical span at residues 58-78; the sequence is LHHPMYFFLSHLASADIGYSS. At 79-102 the chain is on the extracellular side; sequence SVTPNMLVNFLVERNTISYLGCGI. C100 and C192 are joined by a disulfide. Residues 103–123 traverse the membrane as a helical segment; that stretch reads QLGSAVFFGTVECFLLAAMAY. Topologically, residues 124–136 are cytoplasmic; that stretch reads DRFIAICSPLLYS. A helical transmembrane segment spans residues 137-157; it reads NKMSTQVCVQLLVGSYIGGFL. Over 158 to 199 the chain is Extracellular; that stretch reads NASSFTLSFFSLVFCGPNRVNHFFCDFAPLVKLSCSDVSVPA. A helical membrane pass occupies residues 200–220; the sequence is VVPSFTAGSIIIVTIFVIAVS. Residues 221-240 lie on the Cytoplasmic side of the membrane; that stretch reads YIYILITILKMRSTEGRQKA. A helical transmembrane segment spans residues 241 to 261; it reads FSTCTSHLTAVTLFYGTITFI. Residues 262–274 lie on the Extracellular side of the membrane; sequence YVMPKSSYSTDQN. The chain crosses the membrane as a helical span at residues 275–295; the sequence is KVVSVFYMVVVPMLNPLIYSL. Over 296–314 the chain is Cytoplasmic; the sequence is RNKEIKGALKRQLAKNTFS.

It belongs to the G-protein coupled receptor 1 family.

It localises to the cell membrane. In terms of biological role, potential odorant receptor. In Mus musculus (Mouse), this protein is Olfactory receptor 5P76.